A 371-amino-acid polypeptide reads, in one-letter code: Deoxyguanosinetriphosphate triphosphohydrolase-like protein (371 aa).

Residues 62–200 (RITHSIEVAQ…SAISDDIAYN (139 aa)) form the HD domain.

This sequence belongs to the dGTPase family. Type 2 subfamily.

The sequence is that of Deoxyguanosinetriphosphate triphosphohydrolase-like protein from Pelagibacter ubique (strain HTCC1062).